The chain runs to 431 residues: Probable glucarate dehydratase (431 aa).

The substrate site is built by H29, T108, Y153, and K198. Residue K200 is the Proton acceptor of the active site. Mg(2+)-binding residues include D228 and N276. Substrate contacts are provided by residues 228–230 (DPN), N276, 327–329 (HSN), H356, and R410. H327 serves as the catalytic Proton acceptor.

This sequence belongs to the mandelate racemase/muconate lactonizing enzyme family. GlucD subfamily. Requires Mg(2+) as cofactor.

The enzyme catalyses D-glucarate = 5-dehydro-4-deoxy-D-glucarate + H2O. The protein operates within carbohydrate acid metabolism; D-glucarate degradation; 2,5-dioxopentanoate from D-glucarate: step 1/2. Functionally, catalyzes the dehydration of glucarate to 5-keto-4-deoxy-D-glucarate (5-kdGluc). This Streptomyces coelicolor (strain ATCC BAA-471 / A3(2) / M145) protein is Probable glucarate dehydratase (gudD).